The primary structure comprises 86 residues: MMRHVFGMSAEEAKFELRRVLERLGFQVKEMDSEILAEKGSKAVRISLKELGRSELNIPQTEVVFECEEEIYRSILERLRLSRMGG.

This is an uncharacterized protein from Archaeoglobus fulgidus (strain ATCC 49558 / DSM 4304 / JCM 9628 / NBRC 100126 / VC-16).